Reading from the N-terminus, the 399-residue chain is Subtilisin-like protease 4 (399 aa).

Positions 1–19 are cleaved as a signal peptide; sequence MVCLKTLSVFLAAFAAADA. Residues 20–118 constitute a propeptide that is removed on maturation; the sequence is RAVFKTQGHK…VEQDQVVRIS (99 aa). The 80-residue stretch at 38-117 folds into the Inhibitor I9 domain; that stretch reads YIVVMKDGVS…YVEQDQVVRI (80 aa). An N-linked (GlcNAc...) asparagine glycan is attached at Asn-102. The Peptidase S8 domain occupies 128–399; the sequence is SWGLGRVSHR…NRLLYNGSGQ (272 aa). Active-site charge relay system residues include Asp-160 and His-191. N-linked (GlcNAc...) asparagine glycosylation is found at Asn-252 and Asn-308. The active-site Charge relay system is Ser-346. The N-linked (GlcNAc...) asparagine glycan is linked to Asn-395.

Belongs to the peptidase S8 family.

Its subcellular location is the secreted. Its function is as follows. Secreted subtilisin-like serine protease with keratinolytic activity that contributes to pathogenicity. This chain is Subtilisin-like protease 4 (SUB4), found in Trichophyton rubrum (Athlete's foot fungus).